Here is a 283-residue protein sequence, read N- to C-terminus: Bis(5'-nucleosyl)-tetraphosphatase, symmetrical (283 aa).

This sequence belongs to the Ap4A hydrolase family.

The catalysed reaction is P(1),P(4)-bis(5'-adenosyl) tetraphosphate + H2O = 2 ADP + 2 H(+). Hydrolyzes diadenosine 5',5'''-P1,P4-tetraphosphate to yield ADP. In Serratia proteamaculans (strain 568), this protein is Bis(5'-nucleosyl)-tetraphosphatase, symmetrical.